A 630-amino-acid polypeptide reads, in one-letter code: 1-deoxy-D-xylulose-5-phosphate synthase (630 aa).

Thiamine diphosphate-binding positions include His-72 and 113–115; that span reads GHS. Asp-144 contributes to the Mg(2+) binding site. Thiamine diphosphate-binding positions include 145–146, Asn-173, Tyr-284, and Glu-367; that span reads GA. Asn-173 is a Mg(2+) binding site.

The protein belongs to the transketolase family. DXPS subfamily. Homodimer. Mg(2+) is required as a cofactor. Thiamine diphosphate serves as cofactor.

The enzyme catalyses D-glyceraldehyde 3-phosphate + pyruvate + H(+) = 1-deoxy-D-xylulose 5-phosphate + CO2. Its pathway is metabolic intermediate biosynthesis; 1-deoxy-D-xylulose 5-phosphate biosynthesis; 1-deoxy-D-xylulose 5-phosphate from D-glyceraldehyde 3-phosphate and pyruvate: step 1/1. Functionally, catalyzes the acyloin condensation reaction between C atoms 2 and 3 of pyruvate and glyceraldehyde 3-phosphate to yield 1-deoxy-D-xylulose-5-phosphate (DXP). The protein is 1-deoxy-D-xylulose-5-phosphate synthase of Bacillus cereus (strain G9842).